A 35-amino-acid chain; its full sequence is Photosystem II reaction center protein M (35 aa).

The chain crosses the membrane as a helical span at residues 7–27; that stretch reads GFIASILFVLVPTVFLLILFI.

The protein belongs to the PsbM family. As to quaternary structure, PSII is composed of 1 copy each of membrane proteins PsbA, PsbB, PsbC, PsbD, PsbE, PsbF, PsbH, PsbI, PsbJ, PsbK, PsbL, PsbM, PsbT, PsbX, PsbY, PsbZ, Psb30/Ycf12, peripheral proteins PsbO, CyanoQ (PsbQ), PsbU, PsbV and a large number of cofactors. It forms dimeric complexes.

The protein resides in the cellular thylakoid membrane. In terms of biological role, one of the components of the core complex of photosystem II (PSII). PSII is a light-driven water:plastoquinone oxidoreductase that uses light energy to abstract electrons from H(2)O, generating O(2) and a proton gradient subsequently used for ATP formation. It consists of a core antenna complex that captures photons, and an electron transfer chain that converts photonic excitation into a charge separation. This subunit is found at the monomer-monomer interface. This Microcystis aeruginosa (strain NIES-843 / IAM M-2473) protein is Photosystem II reaction center protein M.